A 180-amino-acid chain; its full sequence is Large ribosomal subunit protein uL5 (180 aa).

It belongs to the universal ribosomal protein uL5 family. As to quaternary structure, part of the 50S ribosomal subunit; part of the 5S rRNA/L5/L18/L25 subcomplex. Contacts the 5S rRNA and the P site tRNA. Forms a bridge to the 30S subunit in the 70S ribosome.

In terms of biological role, this is one of the proteins that bind and probably mediate the attachment of the 5S RNA into the large ribosomal subunit, where it forms part of the central protuberance. In the 70S ribosome it contacts protein S13 of the 30S subunit (bridge B1b), connecting the 2 subunits; this bridge is implicated in subunit movement. Contacts the P site tRNA; the 5S rRNA and some of its associated proteins might help stabilize positioning of ribosome-bound tRNAs. In Anaeromyxobacter sp. (strain Fw109-5), this protein is Large ribosomal subunit protein uL5.